The primary structure comprises 178 residues: ATP synthase subunit delta (178 aa).

This sequence belongs to the ATPase delta chain family. As to quaternary structure, F-type ATPases have 2 components, F(1) - the catalytic core - and F(0) - the membrane proton channel. F(1) has five subunits: alpha(3), beta(3), gamma(1), delta(1), epsilon(1). F(0) has three main subunits: a(1), b(2) and c(10-14). The alpha and beta chains form an alternating ring which encloses part of the gamma chain. F(1) is attached to F(0) by a central stalk formed by the gamma and epsilon chains, while a peripheral stalk is formed by the delta and b chains.

It localises to the cell membrane. In terms of biological role, f(1)F(0) ATP synthase produces ATP from ADP in the presence of a proton or sodium gradient. F-type ATPases consist of two structural domains, F(1) containing the extramembraneous catalytic core and F(0) containing the membrane proton channel, linked together by a central stalk and a peripheral stalk. During catalysis, ATP synthesis in the catalytic domain of F(1) is coupled via a rotary mechanism of the central stalk subunits to proton translocation. This protein is part of the stalk that links CF(0) to CF(1). It either transmits conformational changes from CF(0) to CF(1) or is implicated in proton conduction. This Streptococcus agalactiae serotype Ia (strain ATCC 27591 / A909 / CDC SS700) protein is ATP synthase subunit delta.